A 137-amino-acid chain; its full sequence is Peptide methionine sulfoxide reductase MsrB (137 aa).

Positions 7-129 (PGELKNGLSE…NSASLSFTDE (123 aa)) constitute a MsrB domain. The Zn(2+) site is built by Cys46, Cys49, Cys95, and Cys98. Cys118 (nucleophile) is an active-site residue.

It belongs to the MsrB Met sulfoxide reductase family. Zn(2+) is required as a cofactor.

It carries out the reaction L-methionyl-[protein] + [thioredoxin]-disulfide + H2O = L-methionyl-(R)-S-oxide-[protein] + [thioredoxin]-dithiol. The sequence is that of Peptide methionine sulfoxide reductase MsrB from Klebsiella pneumoniae (strain 342).